A 198-amino-acid polypeptide reads, in one-letter code: MSSSGPPAGDGRDDASGPGPAGAAAAADGSVPVSRSIVERWKMEPAAARARLLLRAVAWLFSLLALVVMASNKHGHGGAQDFDNYPEYTYCLGISIIAVLYTTAQVTRDVHRLSWGRDVIAGRKAAAVVDFAGDQVVAYLLMSALSAAAPVTDYMRQAADNLFTDSAAAAISMAFLAFLAAGLSALVSGYNLAMEVLV.

Positions 1 to 27 are disordered; sequence MSSSGPPAGDGRDDASGPGPAGAAAAA. Residues 1 to 51 lie on the Cytoplasmic side of the membrane; the sequence is MSSSGPPAGDGRDDASGPGPAGAAAAADGSVPVSRSIVERWKMEPAAARAR. The span at 16 to 27 shows a compositional bias: low complexity; it reads SGPGPAGAAAAA. The helical transmembrane segment at 52–72 threads the bilayer; sequence LLLRAVAWLFSLLALVVMASN. Residues 73–85 lie on the Extracellular side of the membrane; sequence KHGHGGAQDFDNY. A helical membrane pass occupies residues 86 to 106; it reads PEYTYCLGISIIAVLYTTAQV. Residues 107 to 124 are Cytoplasmic-facing; sequence TRDVHRLSWGRDVIAGRK. A helical transmembrane segment spans residues 125–145; sequence AAAVVDFAGDQVVAYLLMSAL. The Extracellular segment spans residues 146–166; that stretch reads SAAAPVTDYMRQAADNLFTDS. Residues 167–187 traverse the membrane as a helical segment; it reads AAAAISMAFLAFLAAGLSALV. Over 188–198 the chain is Cytoplasmic; it reads SGYNLAMEVLV.

It belongs to the Casparian strip membrane proteins (CASP) family. In terms of assembly, homodimer and heterodimers.

It localises to the cell membrane. In Oryza sativa subsp. japonica (Rice), this protein is CASP-like protein 4B3.